Here is a 162-residue protein sequence, read N- to C-terminus: Transcription antitermination protein RfaH (162 aa).

It belongs to the RfaH family. As to quaternary structure, interacts with both the nontemplate DNA and the RNA polymerase (RNAP).

In terms of biological role, enhances distal genes transcription elongation in a specialized subset of operons that encode extracytoplasmic components. RfaH is recruited into a multi-component RNA polymerase complex by the ops element, which is a short conserved DNA sequence located downstream of the main promoter of these operons. Once bound, RfaH suppresses pausing and inhibits Rho-dependent and intrinsic termination at a subset of sites. Termination signals are bypassed, which allows complete synthesis of long RNA chains. Also negatively controls expression and surface presentation of AG43 and possibly another AG43-independent factor that mediates cell-cell interactions and biofilm formation,. In Escherichia coli O6:K15:H31 (strain 536 / UPEC), this protein is Transcription antitermination protein RfaH.